Reading from the N-terminus, the 478-residue chain is ATP-dependent RNA helicase DDX19A (478 aa).

At A2 the chain carries N-acetylalanine. Residues 2–299 form an N-terminal lobe region; it reads ATDSWALAVD…DPNVIKLKRE (298 aa). K26 is covalently cross-linked (Glycyl lysine isopeptide (Lys-Gly) (interchain with G-Cter in SUMO1); alternate). Residue K26 forms a Glycyl lysine isopeptide (Lys-Gly) (interchain with G-Cter in SUMO2); alternate linkage. Residue T42 is modified to Phosphothreonine. The tract at residues 54–67 is N-terminal helix; sequence DRAAQSLLNKLIRS. Residues 91-119 carry the Q motif motif; sequence KSFEELRLKPQLLQGVYAMGFNRPSKIQE. Residues Q118 and 137–144 contribute to the ATP site; that span reads SQSGTGKT. Residues 124–294 form the Helicase ATP-binding domain; it reads MMLAEPPQNL…QKVVPDPNVI (171 aa). The DEAD box signature appears at 241–244; the sequence is DEAD. A C-terminal lobe region spans residues 300–478; the sequence is EETLDTIKQY…DLDEIEKIAN (179 aa). A Helicase C-terminal domain is found at 305–473; it reads TIKQYYVLCS…RLDTDDLDEI (169 aa). Residues R428 and R431 each coordinate ATP.

It belongs to the DEAD box helicase family. DDX19/DBP5 subfamily.

Its subcellular location is the cytoplasm. The protein localises to the nucleus. The protein resides in the nucleoplasm. The enzyme catalyses ATP + H2O = ADP + phosphate + H(+). Its function is as follows. ATP-dependent RNA helicase involved in mRNA export from the nucleus. Rather than unwinding RNA duplexes, DDX19 functions as a remodeler of ribonucleoprotein particles, whereby proteins bound to nuclear mRNA are dissociated and replaced by cytoplasmic mRNA binding proteins. The chain is ATP-dependent RNA helicase DDX19A (DDX19A) from Homo sapiens (Human).